Reading from the N-terminus, the 259-residue chain is Protein CWC15 homolog (259 aa).

The disordered stretch occupies residues M1–R182. The segment covering D52 to R71 has biased composition (basic and acidic residues). Composition is skewed to low complexity over residues S72–G82 and Q114–A126. Residues D129–A150 show a composition bias toward acidic residues. The stretch at A150 to R182 forms a coiled coil. The segment covering Q157–R182 has biased composition (basic and acidic residues).

This sequence belongs to the CWC15 family.

Involved in pre-mRNA splicing. This Drosophila melanogaster (Fruit fly) protein is Protein CWC15 homolog (c12.1).